The sequence spans 1662 residues: Putative mediator of RNA polymerase II transcription subunit 23 (1662 aa).

Disordered regions lie at residues 1–24, 95–139, 206–252, and 1530–1572; these read MYTN…PQQQ, QQRP…QSQP, TTTP…STTN, and GYDD…QDTN. Residues 39–122 adopt a coiled-coil conformation; sequence QQQNIQQQQQ…QQSQQQQASL (84 aa). Positions 95–124 are enriched in low complexity; the sequence is QQRPQTPQQNAQQQSQQSQQSQQQQASLGQ. Positions 1532–1560 are enriched in acidic residues; sequence DDDDDDEDDDYYDEDDEDEDDDNEDDQQD.

Belongs to the Mediator complex subunit 23 family. Component of the Mediator complex.

It localises to the nucleus. Functionally, component of the Mediator complex, a coactivator involved in the regulated transcription of nearly all RNA polymerase II-dependent genes. Mediator functions as a bridge to convey information from gene-specific regulatory proteins to the basal RNA polymerase II transcription machinery. Mediator is recruited to promoters by direct interactions with regulatory proteins and serves as a scaffold for the assembly of a functional preinitiation complex with RNA polymerase II and the general transcription factors. This is Putative mediator of RNA polymerase II transcription subunit 23 (med23) from Dictyostelium discoideum (Social amoeba).